The primary structure comprises 600 residues: Elongation factor 4 (600 aa).

Positions 4 to 186 (DTIRNFSIIA…EIVKKIPPPE (183 aa)) constitute a tr-type G domain. Residues 16–21 (DHGKST) and 133–136 (NKID) contribute to the GTP site.

Belongs to the TRAFAC class translation factor GTPase superfamily. Classic translation factor GTPase family. LepA subfamily.

It localises to the cell inner membrane. It carries out the reaction GTP + H2O = GDP + phosphate + H(+). In terms of biological role, required for accurate and efficient protein synthesis under certain stress conditions. May act as a fidelity factor of the translation reaction, by catalyzing a one-codon backward translocation of tRNAs on improperly translocated ribosomes. Back-translocation proceeds from a post-translocation (POST) complex to a pre-translocation (PRE) complex, thus giving elongation factor G a second chance to translocate the tRNAs correctly. Binds to ribosomes in a GTP-dependent manner. This Geobacter sulfurreducens (strain ATCC 51573 / DSM 12127 / PCA) protein is Elongation factor 4.